A 732-amino-acid chain; its full sequence is Elongation factor 2 (732 aa).

In terms of domain architecture, tr-type G spans 19 to 230 (ERIRNMGIAA…VSFKDIIDLT (212 aa)). Residues 28-35 (AHIDHGKT), 94-98 (DTPGH), and 148-151 (NKVD) each bind GTP. His-597 carries the post-translational modification Diphthamide.

Belongs to the TRAFAC class translation factor GTPase superfamily. Classic translation factor GTPase family. EF-G/EF-2 subfamily.

It localises to the cytoplasm. In terms of biological role, catalyzes the GTP-dependent ribosomal translocation step during translation elongation. During this step, the ribosome changes from the pre-translocational (PRE) to the post-translocational (POST) state as the newly formed A-site-bound peptidyl-tRNA and P-site-bound deacylated tRNA move to the P and E sites, respectively. Catalyzes the coordinated movement of the two tRNA molecules, the mRNA and conformational changes in the ribosome. The polypeptide is Elongation factor 2 (Thermococcus sibiricus (strain DSM 12597 / MM 739)).